A 227-amino-acid polypeptide reads, in one-letter code: Cytochrome c oxidase subunit 2 (227 aa).

Topologically, residues 1–14 (MAYPFQLGLQDATS) are mitochondrial intermembrane. Residues 15–45 (PIMEELMNFHDHTLMIVFLISSLVLYIISLM) traverse the membrane as a helical segment. The Mitochondrial matrix portion of the chain corresponds to 46-59 (LTTKLTHTSTMDAQ). Residues 60-87 (EVETIWTILPAAILILIALPSLRILYMM) traverse the membrane as a helical segment. The Mitochondrial intermembrane portion of the chain corresponds to 88–227 (DEINNPALTV…YFENWSASMI (140 aa)). Cu cation is bound by residues His-161, Cys-196, Glu-198, Cys-200, His-204, and Met-207. Glu-198 contributes to the Mg(2+) binding site. The residue at position 218 (Tyr-218) is a Phosphotyrosine.

This sequence belongs to the cytochrome c oxidase subunit 2 family. In terms of assembly, component of the cytochrome c oxidase (complex IV, CIV), a multisubunit enzyme composed of 14 subunits. The complex is composed of a catalytic core of 3 subunits MT-CO1, MT-CO2 and MT-CO3, encoded in the mitochondrial DNA, and 11 supernumerary subunits COX4I, COX5A, COX5B, COX6A, COX6B, COX6C, COX7A, COX7B, COX7C, COX8 and NDUFA4, which are encoded in the nuclear genome. The complex exists as a monomer or a dimer and forms supercomplexes (SCs) in the inner mitochondrial membrane with NADH-ubiquinone oxidoreductase (complex I, CI) and ubiquinol-cytochrome c oxidoreductase (cytochrome b-c1 complex, complex III, CIII), resulting in different assemblies (supercomplex SCI(1)III(2)IV(1) and megacomplex MCI(2)III(2)IV(2)). Found in a complex with TMEM177, COA6, COX18, COX20, SCO1 and SCO2. Interacts with TMEM177 in a COX20-dependent manner. Interacts with COX20. Interacts with COX16. The cofactor is Cu cation.

Its subcellular location is the mitochondrion inner membrane. It catalyses the reaction 4 Fe(II)-[cytochrome c] + O2 + 8 H(+)(in) = 4 Fe(III)-[cytochrome c] + 2 H2O + 4 H(+)(out). Its function is as follows. Component of the cytochrome c oxidase, the last enzyme in the mitochondrial electron transport chain which drives oxidative phosphorylation. The respiratory chain contains 3 multisubunit complexes succinate dehydrogenase (complex II, CII), ubiquinol-cytochrome c oxidoreductase (cytochrome b-c1 complex, complex III, CIII) and cytochrome c oxidase (complex IV, CIV), that cooperate to transfer electrons derived from NADH and succinate to molecular oxygen, creating an electrochemical gradient over the inner membrane that drives transmembrane transport and the ATP synthase. Cytochrome c oxidase is the component of the respiratory chain that catalyzes the reduction of oxygen to water. Electrons originating from reduced cytochrome c in the intermembrane space (IMS) are transferred via the dinuclear copper A center (CU(A)) of subunit 2 and heme A of subunit 1 to the active site in subunit 1, a binuclear center (BNC) formed by heme A3 and copper B (CU(B)). The BNC reduces molecular oxygen to 2 water molecules using 4 electrons from cytochrome c in the IMS and 4 protons from the mitochondrial matrix. The sequence is that of Cytochrome c oxidase subunit 2 (MT-CO2) from Lemniscomys barbarus (Barbary striped grass mouse).